Reading from the N-terminus, the 880-residue chain is Paramyosin (880 aa).

The nonhelical region stretch occupies residues 1–34; sequence MSGSLYRSPSAALYKSPSMSAFGGLPAAFGSMSV. Residues 35 to 859 are a coiled coil; it reads ADLGSLTRLE…LIRAKHRHQL (825 aa). A nonhelical region region spans residues 860-880; it reads LRAKMLQRQKFTFSKMSNRDN.

It belongs to the paramyosin family. Homodimer.

The protein resides in the cytoplasm. It is found in the myofibril. Its function is as follows. Paramyosin is a major structural component of many thick filaments isolated from invertebrate muscles. This chain is Paramyosin, found in Brugia malayi (Filarial nematode worm).